The primary structure comprises 511 residues: Cysteine--tRNA ligase 2, cytoplasmic (511 aa).

Residue cysteine 34 coordinates Zn(2+). Residues 36 to 46 (ITAYDFSHIGH) carry the 'HIGH' region motif. The Zn(2+) site is built by cysteine 214, histidine 239, and glutamate 243. The 'KMSKS' region signature appears at 271-275 (KMAKS). An ATP-binding site is contributed by lysine 274. 2 TPR repeats span residues 315-348 (ESSSEALYYVYQTLQDLDEGLSPYQDALSEDGGK) and 368-401 (SKMLDDLNTAHILTGAYQDALKFINASLSKLKKM).

The protein belongs to the class-I aminoacyl-tRNA synthetase family. It depends on Zn(2+) as a cofactor.

It is found in the cytoplasm. It localises to the cytosol. It carries out the reaction tRNA(Cys) + L-cysteine + ATP = L-cysteinyl-tRNA(Cys) + AMP + diphosphate. The sequence is that of Cysteine--tRNA ligase 2, cytoplasmic from Arabidopsis thaliana (Mouse-ear cress).